A 342-amino-acid chain; its full sequence is Ribosomal RNA small subunit methyltransferase H (342 aa).

S-adenosyl-L-methionine is bound by residues 36–38, D56, F82, D100, and Q107; that span reads GGH. The disordered stretch occupies residues 309 to 342; that stretch reads ENRESGMGKGHGAAASRFPTPDSRFPTSPNGDAP. The span at 333 to 342 shows a compositional bias: polar residues; the sequence is FPTSPNGDAP.

This sequence belongs to the methyltransferase superfamily. RsmH family.

Its subcellular location is the cytoplasm. The catalysed reaction is cytidine(1402) in 16S rRNA + S-adenosyl-L-methionine = N(4)-methylcytidine(1402) in 16S rRNA + S-adenosyl-L-homocysteine + H(+). Specifically methylates the N4 position of cytidine in position 1402 (C1402) of 16S rRNA. The protein is Ribosomal RNA small subunit methyltransferase H of Xanthomonas campestris pv. campestris (strain B100).